The sequence spans 330 residues: MRVLFWGTPAYAVPTLEALHGAGHQIVGVVTQPDRRRGRGSSLMPSPVKARALDLLGDVPVLTPQRIRREPETQEQLAALQADLSVVVAFGQLLPPEVLQQPPLGCWNGHGSLLPRWRGAGPIQWCLMEGDAQTGVGIMAMEPGLDTGPVLLERALDVQLLENAAGLAERLSHLTAELFVEALPRIEAAGPGPEAERLSRLAVTPQSDEGVSLARLLSKDDYRIDWSERALAIHRKVMGLFPGAHCSWRGKRLKLLATEPLVARLADQLSPQAAALSQRQWPSAEPGSILEAVRGVGLVLATSGCPILLRQAQLEGKAASSGDSLIQQLS.

Residue 112–115 coordinates (6S)-5,6,7,8-tetrahydrofolate; the sequence is SLLP.

Belongs to the Fmt family.

The enzyme catalyses L-methionyl-tRNA(fMet) + (6R)-10-formyltetrahydrofolate = N-formyl-L-methionyl-tRNA(fMet) + (6S)-5,6,7,8-tetrahydrofolate + H(+). Its function is as follows. Attaches a formyl group to the free amino group of methionyl-tRNA(fMet). The formyl group appears to play a dual role in the initiator identity of N-formylmethionyl-tRNA by promoting its recognition by IF2 and preventing the misappropriation of this tRNA by the elongation apparatus. The chain is Methionyl-tRNA formyltransferase from Synechococcus sp. (strain RCC307).